Reading from the N-terminus, the 366-residue chain is Alcohol dehydrogenase (366 aa).

Residues cysteine 41, histidine 62, glutamate 63, and aspartate 167 each contribute to the Zn(2+) site.

Belongs to the zinc-containing alcohol dehydrogenase family. In terms of assembly, homotetramer. Requires Zn(2+) as cofactor.

It carries out the reaction a primary alcohol + NAD(+) = an aldehyde + NADH + H(+). The enzyme catalyses a secondary alcohol + NAD(+) = a ketone + NADH + H(+). The catalysed reaction is (R,R)-butane-2,3-diol + NAD(+) = (R)-acetoin + NADH + H(+). It catalyses the reaction an aldehyde + NAD(+) + H2O = a carboxylate + NADH + 2 H(+). Functionally, multifunctional alcohol dehydrogenase exhibiting NAD(+)-dependent dehydrogenase activities for 2,3-butanediol, ethanol and acetaldehyde, and reductase activities for acetoin (NADH-dependent), and diacetyl and acetaldehyde (independently of whether NADH or NADPH is the reductant). The rate of oxidation of 2,3-butanediol is much higher than for the oxidation of ethanol. Has acetaldehyde dehydrogenase activity leading to acetate formation. May function in the release of excess reducing power in the absence of exogenous hydrogen acceptors such as oxygen. The chain is Alcohol dehydrogenase (adh) from Cupriavidus necator (strain ATCC 17699 / DSM 428 / KCTC 22496 / NCIMB 10442 / H16 / Stanier 337) (Ralstonia eutropha).